The chain runs to 355 residues: Uroporphyrinogen decarboxylase (355 aa).

Substrate contacts are provided by residues 27 to 31 (RQAGR), D77, Y154, T209, and H327.

Belongs to the uroporphyrinogen decarboxylase family. As to quaternary structure, homodimer.

The protein localises to the cytoplasm. It catalyses the reaction uroporphyrinogen III + 4 H(+) = coproporphyrinogen III + 4 CO2. The protein operates within porphyrin-containing compound metabolism; protoporphyrin-IX biosynthesis; coproporphyrinogen-III from 5-aminolevulinate: step 4/4. Functionally, catalyzes the decarboxylation of four acetate groups of uroporphyrinogen-III to yield coproporphyrinogen-III. This chain is Uroporphyrinogen decarboxylase, found in Yersinia enterocolitica serotype O:8 / biotype 1B (strain NCTC 13174 / 8081).